Reading from the N-terminus, the 184-residue chain is Crossover junction endodeoxyribonuclease RuvC (184 aa).

Active-site residues include Asp-11, Glu-73, and Asp-147. Positions 11, 73, and 147 each coordinate Mg(2+).

The protein belongs to the RuvC family. As to quaternary structure, homodimer which binds Holliday junction (HJ) DNA. The HJ becomes 2-fold symmetrical on binding to RuvC with unstacked arms; it has a different conformation from HJ DNA in complex with RuvA. In the full resolvosome a probable DNA-RuvA(4)-RuvB(12)-RuvC(2) complex forms which resolves the HJ. Mg(2+) serves as cofactor.

It is found in the cytoplasm. The catalysed reaction is Endonucleolytic cleavage at a junction such as a reciprocal single-stranded crossover between two homologous DNA duplexes (Holliday junction).. Its function is as follows. The RuvA-RuvB-RuvC complex processes Holliday junction (HJ) DNA during genetic recombination and DNA repair. Endonuclease that resolves HJ intermediates. Cleaves cruciform DNA by making single-stranded nicks across the HJ at symmetrical positions within the homologous arms, yielding a 5'-phosphate and a 3'-hydroxyl group; requires a central core of homology in the junction. The consensus cleavage sequence is 5'-(A/T)TT(C/G)-3'. Cleavage occurs on the 3'-side of the TT dinucleotide at the point of strand exchange. HJ branch migration catalyzed by RuvA-RuvB allows RuvC to scan DNA until it finds its consensus sequence, where it cleaves and resolves the cruciform DNA. The chain is Crossover junction endodeoxyribonuclease RuvC from Neisseria gonorrhoeae (strain ATCC 700825 / FA 1090).